Reading from the N-terminus, the 562-residue chain is NAD-dependent malic enzyme (562 aa).

The active-site Proton donor is the tyrosine 101. An NAD(+)-binding site is contributed by arginine 154. The active-site Proton acceptor is lysine 172. Residues glutamate 243, aspartate 244, and aspartate 267 each coordinate a divalent metal cation. NAD(+)-binding residues include aspartate 267 and asparagine 415.

The protein belongs to the malic enzymes family. In terms of assembly, homotetramer. Mg(2+) serves as cofactor. The cofactor is Mn(2+).

It carries out the reaction (S)-malate + NAD(+) = pyruvate + CO2 + NADH. The catalysed reaction is oxaloacetate + H(+) = pyruvate + CO2. In Aliivibrio fischeri (strain MJ11) (Vibrio fischeri), this protein is NAD-dependent malic enzyme.